The following is a 270-amino-acid chain: MSIPNEYIAKTEDVAEQVIKRGKNVLPTVARLCLIATFFEDGLRMYIQWNEQREYMDMSWGCGKFLATVFVLVNLLGQLGGCGMVMARFKVDIAVGLLFFIVVLQTVAYSILWDFQFLLRNFALIGALLLVLAEARIEGRSLFAGVPSMGENKPKNFMQLAGRILLAFMFITLIRFELSVWQVIQDIIGSILMVLVVLGYKTKLSALILVALLTILNLYHNAWWTIPSYKPLRDFLKYDFFQTLSVIGGLLMIVSLGPGGVSMDEHKKKW.

The next 6 membrane-spanning stretches (helical) occupy residues 65-85 (FLATVFVLVNLLGQLGGCGMV), 93-113 (IAVGLLFFIVVLQTVAYSILW), 115-135 (FQFLLRNFALIGALLLVLAEA), 178-198 (LSVWQVIQDIIGSILMVLVVL), 206-226 (ALILVALLTILNLYHNAWWTI), and 243-263 (TLSVIGGLLMIVSLGPGGVSM). Positions 267-270 (KKKW) match the Di-lysine motif motif.

It belongs to the SURF4 family.

It is found in the endoplasmic reticulum membrane. In terms of biological role, endoplasmic reticulum cargo receptor that mediates the export of lipoproteins by recruiting cargos into COPII vesicles to facilitate their secretion. The polypeptide is Surfeit locus protein 4 homolog (Drosophila melanogaster (Fruit fly)).